A 174-amino-acid chain; its full sequence is Peptide deformylase (174 aa).

Fe cation-binding residues include Cys-96 and His-138. Glu-139 is an active-site residue. Residue His-142 participates in Fe cation binding.

It belongs to the polypeptide deformylase family. Fe(2+) serves as cofactor.

It catalyses the reaction N-terminal N-formyl-L-methionyl-[peptide] + H2O = N-terminal L-methionyl-[peptide] + formate. Removes the formyl group from the N-terminal Met of newly synthesized proteins. Requires at least a dipeptide for an efficient rate of reaction. N-terminal L-methionine is a prerequisite for activity but the enzyme has broad specificity at other positions. This Helicobacter pylori (strain G27) protein is Peptide deformylase.